A 262-amino-acid chain; its full sequence is Troponin T, slow skeletal muscle (262 aa).

The span at 1-31 (MSDTEEQEYEEEQAEDEEAVEEEEAPEEPEP) shows a compositional bias: acidic residues. Disordered stretches follow at residues 1-62 (MSDT…ERVD) and 109-153 (ERAE…KKKV). The residue at position 2 (Ser-2) is a Phosphoserine; by CK2. The segment covering 32–41 (VAEREEERPK) has biased composition (basic and acidic residues). Residues 43-55 (SRPVVPPLIPPKI) are compositionally biased toward pro residues. A compositionally biased stretch (basic and acidic residues) spans 109–149 (ERAEQQRFRTEKERERQAKLAEEKMRKEEEEAKKRAEDDAK).

The protein belongs to the troponin T family. As to quaternary structure, interacts with TPM3. As to expression, expressed in adult soleus muscle.

Its function is as follows. Troponin T is the tropomyosin-binding subunit of troponin, the thin filament regulatory complex which confers calcium-sensitivity to striated muscle actomyosin ATPase activity. The chain is Troponin T, slow skeletal muscle (Tnnt1) from Mus musculus (Mouse).